Reading from the N-terminus, the 350-residue chain is Leucine-rich repeat-containing protein 23 (350 aa).

The segment covering 1–54 has biased composition (acidic residues); it reads MEDETLEDGPEEEEEDEEEGTAEETNQDVTERDEEEEAEKDEEEDKEEEEEAEK. The interval 1-64 is disordered; that stretch reads MEDETLEDGP…EEPPPHMPLS (64 aa). LRR repeat units lie at residues 107–128, 129–150, 151–171, 172–193, 196–216, 217–238, 239–260, and 262–283; these read HLRY…GALT, HLLS…GELP, YLQV…FGHP, RLET…ECSN, SLHT…LNLP, SLRE…EALV, NLTT…SEHL, and ALQY…QKLY. An LRRCT domain is found at 296–334; the sequence is NPCEEEEGYRMETLIALPQLERLDKDFFEEEEKREAAET. The stretch at 314–344 forms a coiled coil; that stretch reads QLERLDKDFFEEEEKREAAETKKAREEEMAE. Residues 325–350 are disordered; the sequence is EEEKREAAETKKAREEEMAEPGEKGN.

It localises to the cytoplasm. Its subcellular location is the cytoskeleton. The protein localises to the flagellum axoneme. The polypeptide is Leucine-rich repeat-containing protein 23 (lrrc23) (Xenopus tropicalis (Western clawed frog)).